A 450-amino-acid polypeptide reads, in one-letter code: 23S rRNA (uracil(1939)-C(5))-methyltransferase RlmD (450 aa).

Residues 12–70 (SKQLSAKLSLNVDQLDHLGAGIAQYQGKVVFIPGALPDETVTVQLTEQKKNYARAKLIK) form the TRAM domain. 4 residues coordinate [4Fe-4S] cluster: Cys83, Cys89, Cys92, and Cys171. Residues Gln283, Phe312, Asn317, Glu333, Asp360, and Asp380 each contribute to the S-adenosyl-L-methionine site. Cys406 serves as the catalytic Nucleophile.

The protein belongs to the class I-like SAM-binding methyltransferase superfamily. RNA M5U methyltransferase family. RlmD subfamily.

It carries out the reaction uridine(1939) in 23S rRNA + S-adenosyl-L-methionine = 5-methyluridine(1939) in 23S rRNA + S-adenosyl-L-homocysteine + H(+). Its function is as follows. Catalyzes the formation of 5-methyl-uridine at position 1939 (m5U1939) in 23S rRNA. The polypeptide is 23S rRNA (uracil(1939)-C(5))-methyltransferase RlmD (Shewanella sp. (strain W3-18-1)).